A 164-amino-acid chain; its full sequence is Neurotrophin-3 (164 aa).

The N-terminal stretch at 1-3 is a signal peptide; that stretch reads IQS. The propeptide occupies 4 to 120; it reads TNMDQQGSLT…ALNRTSRRKR (117 aa). Asn-113 is a glycosylation site (N-linked (GlcNAc...) asparagine).

This sequence belongs to the NGF-beta family.

The protein resides in the secreted. Its function is as follows. Seems to promote the survival of visceral and proprioceptive sensory neurons. The sequence is that of Neurotrophin-3 (NTF3) from Sanzinia madagascariensis (Madagascar tree boa).